A 378-amino-acid polypeptide reads, in one-letter code: MASALGAQASVAAPIGAGGYGRSSSSKGSNTVNFCNKSWIGTTLAWESKALKSRHMNKIFSMSVQQASKSKVAVKPLELDNAKEPPLNLYKPKEPYTATIVSVERLVGPKAPGETCHIVIDHGGNVPYWEGQSYGVIPPGENPKKPGSPNTVRLYSIASTRYGDSFDGKTASLCVRRAVYYDPETGKEDPTKKGICSNFLCDSKPGDKVQITGPSGKIMLLPEDDPNATHIMIATGTGVAPYRGYLRRMFMEDVPSFKFGGLAWLFLGVANTDSLLYDEEFTNYLQQYPDNFRYDKALSREQKNKNGGKMYVQDKIEEYSDEIFKLLDGGAHIYFCGLKGMMPGIQDTLKRVAEQRGESWEQKLSQLKKNKQWHVEVY.

The N-terminal 62 residues, 1 to 62 (MASALGAQAS…SRHMNKIFSM (62 aa)), are a transit peptide targeting the chloroplast. Residues 93–221 (KEPYTATIVS…TGPSGKIMLL (129 aa)) enclose the FAD-binding FR-type domain. FAD-binding positions include 153 to 156 (RLYS), 174 to 176 (CVR), Y180, 195 to 197 (ICS), and T237. The NADP(+) site is built by S156 and R176. Residues T237, 269-270 (VA), 299-300 (SR), K309, 337-338 (GL), and E376 each bind NADP(+).

This sequence belongs to the ferredoxin--NADP reductase type 1 family. Requires FAD as cofactor.

Its subcellular location is the plastid. It is found in the chloroplast. The catalysed reaction is 2 reduced [2Fe-2S]-[ferredoxin] + NADP(+) + H(+) = 2 oxidized [2Fe-2S]-[ferredoxin] + NADPH. Its pathway is energy metabolism; photosynthesis. May play a key role in regulating the relative amounts of cyclic and non-cyclic electron flow to meet the demands of the plant for ATP and reducing power. Is involved in nitrate assimilation. This Oryza sativa subsp. japonica (Rice) protein is Ferredoxin--NADP reductase, embryo isozyme, chloroplastic.